The chain runs to 120 residues: Autophagy-related protein 8C (120 aa).

Positions 1 to 20 (MARSSFKLEHPLERRQAEAN) are disordered. Gly117 carries Phosphatidylethanolamine amidated glycine lipidation. The propeptide at 118–120 (LFV) is removed in mature form.

The protein belongs to the ATG8 family. As to quaternary structure, interacts with ATG4. In terms of processing, the C-terminal 3 residues are removed by ATG4 to expose Gly-117 at the C-terminus. The C-terminal Gly is then amidated with phosphatidylethanolamine by an activating system similar to that for ubiquitin.

The protein resides in the cytoplasmic vesicle. It localises to the autophagosome membrane. The protein localises to the vacuole membrane. It is found in the cytoplasm. Its subcellular location is the cytoskeleton. Ubiquitin-like modifier involved in autophagosomes formation. May mediate the delivery of the autophagosomes to the vacuole via the microtubule cytoskeleton. In Oryza sativa subsp. indica (Rice), this protein is Autophagy-related protein 8C (ATG8C).